The chain runs to 154 residues: Large ribosomal subunit protein uL30 (154 aa).

The disordered stretch occupies residues 114–139 (PTLRLHPPRGGHDGIKHPTKEGGQLG). Positions 123-133 (GGHDGIKHPTK) are enriched in basic and acidic residues.

The protein belongs to the universal ribosomal protein uL30 family. As to quaternary structure, part of the 50S ribosomal subunit.

In Natronomonas pharaonis (strain ATCC 35678 / DSM 2160 / CIP 103997 / JCM 8858 / NBRC 14720 / NCIMB 2260 / Gabara) (Halobacterium pharaonis), this protein is Large ribosomal subunit protein uL30.